The following is a 102-amino-acid chain: NADH-quinone oxidoreductase subunit K 1 (102 aa).

3 helical membrane passes run 5–25 (ISHY…GIFL), 31–51 (IIIL…MVAF), and 65–85 (LFIL…LVVF).

The protein belongs to the complex I subunit 4L family. As to quaternary structure, NDH-1 is composed of 14 different subunits. Subunits NuoA, H, J, K, L, M, N constitute the membrane sector of the complex.

The protein localises to the cell inner membrane. The catalysed reaction is a quinone + NADH + 5 H(+)(in) = a quinol + NAD(+) + 4 H(+)(out). Its function is as follows. NDH-1 shuttles electrons from NADH, via FMN and iron-sulfur (Fe-S) centers, to quinones in the respiratory chain. The immediate electron acceptor for the enzyme in this species is believed to be ubiquinone. Couples the redox reaction to proton translocation (for every two electrons transferred, four hydrogen ions are translocated across the cytoplasmic membrane), and thus conserves the redox energy in a proton gradient. This is NADH-quinone oxidoreductase subunit K 1 from Rhizobium meliloti (strain 1021) (Ensifer meliloti).